The following is a 369-amino-acid chain: Phosphate-binding protein PstS 3 (369 aa).

An N-terminal signal peptide occupies residues 1–21 (MKLNQFGAAIGLLATGALLSG). The N-palmitoyl cysteine moiety is linked to residue cysteine 22. Cysteine 22 is lipidated: S-diacylglycerol cysteine. Phosphate-binding positions include 55–57 (STA), serine 85, aspartate 103, and 190–192 (SGT).

It belongs to the PstS family. In terms of assembly, the complex is composed of two ATP-binding proteins (PstB), two transmembrane proteins (PstC and PstA) and a solute-binding protein (PstS).

The protein resides in the cell membrane. Part of the ABC transporter complex PstSACB involved in phosphate import. The chain is Phosphate-binding protein PstS 3 (pstS2) from Mycobacterium leprae (strain TN).